The sequence spans 204 residues: FMN-dependent NADH:quinone oxidoreductase 1 (204 aa).

Residues S14, S20–S22, and M99–F102 contribute to the FMN site.

Belongs to the azoreductase type 1 family. As to quaternary structure, homodimer. It depends on FMN as a cofactor.

It catalyses the reaction 2 a quinone + NADH + H(+) = 2 a 1,4-benzosemiquinone + NAD(+). The enzyme catalyses N,N-dimethyl-1,4-phenylenediamine + anthranilate + 2 NAD(+) = 2-(4-dimethylaminophenyl)diazenylbenzoate + 2 NADH + 2 H(+). In terms of biological role, quinone reductase that provides resistance to thiol-specific stress caused by electrophilic quinones. Functionally, also exhibits azoreductase activity. Catalyzes the reductive cleavage of the azo bond in aromatic azo compounds to the corresponding amines. This chain is FMN-dependent NADH:quinone oxidoreductase 1, found in Hahella chejuensis (strain KCTC 2396).